The chain runs to 433 residues: O-methyltransferase aclM (433 aa).

The stretch at 5–37 (LTDAERTALQTSLEALNRQVEATRNILRSNSQK) forms a coiled coil. S-adenosyl-L-methionine-binding positions include aspartate 277 and 311-313 (GDF). Histidine 330 functions as the Proton acceptor in the catalytic mechanism.

Belongs to the class I-like SAM-binding methyltransferase superfamily. Cation-independent O-methyltransferase family. COMT subfamily.

Its pathway is mycotoxin biosynthesis. O-methyltransferase; part of the gene cluster that mediates the biosynthesis of aspirochlorine (or antibiotic A30641), an unusual halogenated spiro compound with distinctive antifungal properties due to selective inhibition of protein biosynthesis, and which is also active against bacteria, viruses, and murine tumor cells. The non-ribosomal peptide synthetase (NRPS) aclP is responsible the formation of the diketopiperazine (DKP) core from the condensation of 2 phenylalanine residues. One Phe residue is tailored into chlorotyrosine by hydroxylation and chlorination, whereas the second Phe undergoes an unprecedented C-C bond cleavage to be converted into glycine. After formation of the DKP, sulfur is incorporated into the DKP by conjugation with glutathione by aclG, followed by its stepwise degradation to the thiol by aclI, aclJ and aclK, and the dithiol oxidation by aclT. In addition, oxygenases (aclB, aclC, aclL and aclO) and O-methyltransferases (aclM and aclU) act as tailoring enzymes to produce the intermediate dechloroaspirochlorine. Ultimately, chlorination of dechloroaspirochlorine by the halogenase aclH is the last step in the aspirochlorine pathway. The polypeptide is O-methyltransferase aclM (Aspergillus oryzae (strain ATCC 42149 / RIB 40) (Yellow koji mold)).